Here is a 558-residue protein sequence, read N- to C-terminus: Glucose-6-phosphate isomerase (558 aa).

Alanine 2 is subject to N-acetylalanine. Lysine 12 bears the N6-acetyllysine mark. Position 34 is an N6-(2-hydroxyisobutyryl)lysine (lysine 34). A Phosphoserine modification is found at serine 107. Threonine 109 is subject to Phosphothreonine. Lysine 142 is subject to N6-acetyllysine. 159–160 provides a ligand contact to D-glucose 6-phosphate; the sequence is GS. Serine 185 carries the phosphoserine; by CK2 modification. 210 to 215 lines the D-glucose 6-phosphate pocket; it reads SKTFTT. A Phosphothreonine modification is found at threonine 250. Glutamine 354, glutamate 358, and histidine 389 together coordinate D-glucose 6-phosphate. Glutamate 358 functions as the Proton donor in the catalytic mechanism. The active site involves histidine 389. Lysine 454 is subject to N6-acetyllysine; alternate. At lysine 454 the chain carries N6-malonyllysine; alternate. The residue at position 454 (lysine 454) is an N6-succinyllysine; alternate. Phosphoserine is present on serine 455. Lysine 519 lines the D-glucose 6-phosphate pocket. The active site involves lysine 519.

This sequence belongs to the GPI family. In terms of assembly, homodimer; in the catalytically active form. Monomer in the secreted form. In terms of processing, phosphorylation at Ser-185 by CK2 has been shown to decrease enzymatic activity and may contribute to secretion by a non-classical secretory pathway. Post-translationally, ISGylated.

The protein localises to the cytoplasm. The protein resides in the secreted. It catalyses the reaction alpha-D-glucose 6-phosphate = beta-D-fructose 6-phosphate. It functions in the pathway carbohydrate degradation; glycolysis; D-glyceraldehyde 3-phosphate and glycerone phosphate from D-glucose: step 2/4. In the cytoplasm, catalyzes the conversion of glucose-6-phosphate to fructose-6-phosphate, the second step in glycolysis, and the reverse reaction during gluconeogenesis. Besides it's role as a glycolytic enzyme, also acts as a secreted cytokine: acts as an angiogenic factor (AMF) that stimulates endothelial cell motility. Acts as a neurotrophic factor, neuroleukin, for spinal and sensory neurons. It is secreted by lectin-stimulated T-cells and induces immunoglobulin secretion. The protein is Glucose-6-phosphate isomerase of Pongo abelii (Sumatran orangutan).